We begin with the raw amino-acid sequence, 260 residues long: Indole-3-glycerol phosphate synthase (260 aa).

The protein belongs to the TrpC family.

The catalysed reaction is 1-(2-carboxyphenylamino)-1-deoxy-D-ribulose 5-phosphate + H(+) = (1S,2R)-1-C-(indol-3-yl)glycerol 3-phosphate + CO2 + H2O. It participates in amino-acid biosynthesis; L-tryptophan biosynthesis; L-tryptophan from chorismate: step 4/5. The protein is Indole-3-glycerol phosphate synthase of Neisseria gonorrhoeae (strain ATCC 700825 / FA 1090).